Consider the following 326-residue polypeptide: Lipoyl synthase (326 aa).

The [4Fe-4S] cluster site is built by C74, C79, C85, C100, C104, C107, and S314. A Radical SAM core domain is found at 85–303; the sequence is CFGKGTATFM…EEEAYKMGFT (219 aa).

The protein belongs to the radical SAM superfamily. Lipoyl synthase family. [4Fe-4S] cluster is required as a cofactor.

The protein resides in the cytoplasm. It carries out the reaction [[Fe-S] cluster scaffold protein carrying a second [4Fe-4S](2+) cluster] + N(6)-octanoyl-L-lysyl-[protein] + 2 oxidized [2Fe-2S]-[ferredoxin] + 2 S-adenosyl-L-methionine + 4 H(+) = [[Fe-S] cluster scaffold protein] + N(6)-[(R)-dihydrolipoyl]-L-lysyl-[protein] + 4 Fe(3+) + 2 hydrogen sulfide + 2 5'-deoxyadenosine + 2 L-methionine + 2 reduced [2Fe-2S]-[ferredoxin]. It functions in the pathway protein modification; protein lipoylation via endogenous pathway; protein N(6)-(lipoyl)lysine from octanoyl-[acyl-carrier-protein]: step 2/2. Functionally, catalyzes the radical-mediated insertion of two sulfur atoms into the C-6 and C-8 positions of the octanoyl moiety bound to the lipoyl domains of lipoate-dependent enzymes, thereby converting the octanoylated domains into lipoylated derivatives. This is Lipoyl synthase from Delftia acidovorans (strain DSM 14801 / SPH-1).